We begin with the raw amino-acid sequence, 293 residues long: DOMON domain-containing protein FRRS1L (293 aa).

An N-terminal signal peptide occupies residues 1–28 (MARPPRQHPGVWASLLLLLLTGPAACAA). The interval 29–61 (SPADDGAGPGGRGPRGRARGDTGADEAVPRHDS) is disordered. A compositionally biased stretch (basic and acidic residues) spans 46 to 61 (ARGDTGADEAVPRHDS). The DOMON domain maps to 119–234 (CDYFLSYRMI…WYYLFAWGPA (116 aa)). Residues 271–291 (TFSSPFCLLLIVALTFYLLMG) traverse the membrane as a helical segment.

As to quaternary structure, component of the outer core of AMPAR complex. AMPAR complex consists of an inner core made of 4 pore-forming GluA/GRIA proteins (GRIA1, GRIA2, GRIA3 and GRIA4) and 4 major auxiliary subunits arranged in a twofold symmetry. One of the two pairs of distinct binding sites is occupied either by CNIH2, CNIH3 or CACNG2, CACNG3. The other harbors CACNG2, CACNG3, CACNG4, CACNG8 or GSG1L. This inner core of AMPAR complex is complemented by outer core constituents binding directly to the GluA/GRIA proteins at sites distinct from the interaction sites of the inner core constituents. Outer core constituents include at least PRRT1, PRRT2, CKAMP44/SHISA9, FRRS1L and NRN1. The proteins of the inner and outer core serve as a platform for other, more peripherally associated AMPAR constituents. Alone or in combination, these auxiliary subunits control the gating and pharmacology of the AMPAR complex and profoundly impact their biogenesis and protein processing. As to expression, expressed in adult and fetal brain. Very weak expression in medulla, spinal cord and in adult ovary.

The protein localises to the cell membrane. The protein resides in the synapse. Important modulator of glutamate signaling pathway. This chain is DOMON domain-containing protein FRRS1L (FRRS1L), found in Homo sapiens (Human).